The sequence spans 401 residues: Beta-ketoadipyl-CoA thiolase (401 aa).

Cys91 functions as the Acyl-thioester intermediate in the catalytic mechanism. Catalysis depends on proton acceptor residues His357 and Cys387.

It belongs to the thiolase-like superfamily. Thiolase family.

It carries out the reaction succinyl-CoA + acetyl-CoA = 3-oxoadipyl-CoA + CoA. It functions in the pathway aromatic compound metabolism; beta-ketoadipate pathway; acetyl-CoA and succinyl-CoA from 3-oxoadipate: step 2/2. Catalyzes thiolytic cleavage of beta-ketoadipyl-CoA to succinyl-CoA and acetyl-CoA. This is Beta-ketoadipyl-CoA thiolase (pcaF) from Pseudomonas aeruginosa (strain ATCC 15692 / DSM 22644 / CIP 104116 / JCM 14847 / LMG 12228 / 1C / PRS 101 / PAO1).